The chain runs to 289 residues: Acetyl-coenzyme A carboxylase carboxyl transferase subunit beta (289 aa).

The 254-residue stretch at 36–289 (MWLRCPHCHQ…LLKTGSVANE (254 aa)) folds into the CoA carboxyltransferase N-terminal domain. Zn(2+)-binding residues include Cys-40, Cys-43, Cys-58, and Cys-61. Residues 40 to 61 (CPHCHQLLFAKQLTQYAVCPNC) form a C4-type zinc finger.

The protein belongs to the AccD/PCCB family. Acetyl-CoA carboxylase is a heterohexamer composed of biotin carboxyl carrier protein (AccB), biotin carboxylase (AccC) and two subunits each of ACCase subunit alpha (AccA) and ACCase subunit beta (AccD). It depends on Zn(2+) as a cofactor.

It localises to the cytoplasm. The enzyme catalyses N(6)-carboxybiotinyl-L-lysyl-[protein] + acetyl-CoA = N(6)-biotinyl-L-lysyl-[protein] + malonyl-CoA. The protein operates within lipid metabolism; malonyl-CoA biosynthesis; malonyl-CoA from acetyl-CoA: step 1/1. Functionally, component of the acetyl coenzyme A carboxylase (ACC) complex. Biotin carboxylase (BC) catalyzes the carboxylation of biotin on its carrier protein (BCCP) and then the CO(2) group is transferred by the transcarboxylase to acetyl-CoA to form malonyl-CoA. This is Acetyl-coenzyme A carboxylase carboxyl transferase subunit beta from Limosilactobacillus reuteri subsp. reuteri (strain JCM 1112) (Lactobacillus reuteri).